We begin with the raw amino-acid sequence, 457 residues long: Serine--tRNA ligase (457 aa).

252-254 is an L-serine binding site; that stretch reads TAE. Residues 283-285 and Val299 contribute to the ATP site; that span reads RKE. Glu306 serves as a coordination point for L-serine. Residue 370-373 coordinates ATP; it reads EMVS. L-serine is bound at residue Thr406.

Belongs to the class-II aminoacyl-tRNA synthetase family. Type-1 seryl-tRNA synthetase subfamily. Homodimer. The tRNA molecule binds across the dimer.

It is found in the cytoplasm. It carries out the reaction tRNA(Ser) + L-serine + ATP = L-seryl-tRNA(Ser) + AMP + diphosphate + H(+). The enzyme catalyses tRNA(Sec) + L-serine + ATP = L-seryl-tRNA(Sec) + AMP + diphosphate + H(+). It participates in aminoacyl-tRNA biosynthesis; selenocysteinyl-tRNA(Sec) biosynthesis; L-seryl-tRNA(Sec) from L-serine and tRNA(Sec): step 1/1. Functionally, catalyzes the attachment of serine to tRNA(Ser). Is also able to aminoacylate tRNA(Sec) with serine, to form the misacylated tRNA L-seryl-tRNA(Sec), which will be further converted into selenocysteinyl-tRNA(Sec). The chain is Serine--tRNA ligase from Saccharolobus islandicus (strain M.14.25 / Kamchatka #1) (Sulfolobus islandicus).